The following is a 75-amino-acid chain: DNA-directed RNA polymerase subunit omega (75 aa).

This sequence belongs to the RNA polymerase subunit omega family. In terms of assembly, in cyanobacteria the RNAP catalytic core is composed of 2 alpha, 1 beta, 1 beta', 1 gamma and 1 omega subunit. When a sigma factor is associated with the core the holoenzyme is formed, which can initiate transcription.

The catalysed reaction is RNA(n) + a ribonucleoside 5'-triphosphate = RNA(n+1) + diphosphate. Promotes RNA polymerase assembly. Latches the N- and C-terminal regions of the beta' subunit thereby facilitating its interaction with the beta and alpha subunits. This is DNA-directed RNA polymerase subunit omega from Prochlorococcus marinus (strain MIT 9313).